The primary structure comprises 361 residues: Oxidoreductase lepF (361 aa).

The chain crosses the membrane as a helical span at residues 257 to 277 (MLMLVLQAVLLPVFYVVAMPL).

It belongs to the NmrA-type oxidoreductase family.

Its subcellular location is the membrane. Oxidoreductase; part of the gene cluster 23 that mediates the biosynthesis of a family of 2-pyridones known as leporins. The hybrid PKS-NRPS synthetase lepA and the enoyl reductase lepG are responsible for fusion of phenylalanine with a hexaketide and subsequent release of the stable tetramic acid precursor, pre-leporin C. Because lepA lacks a designated enoylreductase (ER) domain, the required activity is provided the enoyl reductase lepG. It is possible that the dehydrogenase lepF also participates in production of pre-leporin C. Cytochrome P450 monooxygenase lepH is then required for the ring expansion step to yield leporin C. Leporin C is then presumably further oxidized by the N-hydroxylase lepD to form leporin B. LepI may possess a function in biosynthesis upstream of lepA. Leporin B is further oxidized in the presence of ferric ion to give the leporin B trimer-iron chelate, but whether or not this reaction is catalyzed by an enzyme in the pathway or by ferric ion is not determined yet. The sequence is that of Oxidoreductase lepF from Aspergillus flavus (strain ATCC 200026 / FGSC A1120 / IAM 13836 / NRRL 3357 / JCM 12722 / SRRC 167).